Here is a 363-residue protein sequence, read N- to C-terminus: Sensor protein BasS (363 aa).

The Cytoplasmic portion of the chain corresponds to 1–13 (MHFLRRPISLRQR). The chain crosses the membrane as a helical span at residues 14–34 (LILTIGAILLVFELISVFWLW). The Periplasmic segment spans residues 35-64 (HESTEQIQLFEQALRDNRNNDRHIMREIRE). Residues 65-88 (AVASLIVPGVFMVSLTLFICYQAV) form a helical membrane-spanning segment. Positions 89 to 141 (RRITRPLAELQKELEARTADNLTPIAIHSATLEIEAVVSALNDLVSRLTSTLD) constitute an HAMP domain. Residues 89–363 (RRITRPLAEL…KKDQYVANQI (275 aa)) lie on the Cytoplasmic side of the membrane. A Histidine kinase domain is found at 149 to 357 (DVAHELRTPL…RAWVRLKKDQ (209 aa)). A Phosphohistidine; by autocatalysis modification is found at histidine 152.

Autophosphorylated.

The protein resides in the cell inner membrane. The enzyme catalyses ATP + protein L-histidine = ADP + protein N-phospho-L-histidine.. Member of the two-component regulatory system BasS/BasR Autophosphorylates and activates BasR by phosphorylation. This is Sensor protein BasS (basS) from Escherichia coli (strain K12).